Reading from the N-terminus, the 743-residue chain is Homeobox-leucine zipper protein PROTODERMAL FACTOR 2 (743 aa).

The segment at 1–72 is disordered; that stretch reads MYHPNMFESH…KKRYHRHTQR (72 aa). Residues 30-39 are compositionally biased toward basic and acidic residues; it reads SREDDFETKS. The span at 60–71 shows a compositional bias: basic residues; the sequence is PNKKKRYHRHTQ. Positions 62 to 121 form a DNA-binding region, homeobox; the sequence is KKKRYHRHTQRQIQELESFFKECPHPDDKQRKELSRDLNLEPLQVKFWFQNKRTQMKAQS. Residues 110–192 adopt a coiled-coil conformation; sequence FQNKRTQMKA…DRISAIAAKY (83 aa). Residues 244–476 enclose the START domain; that stretch reads SETDKPIIVE…LERQCERLAS (233 aa).

The protein belongs to the HD-ZIP homeobox family. Class IV subfamily. In terms of assembly, interacts with GAI/RGA2, RGA/RGA1/GRS, RGL2/SCL19 and ATML1. Binds to AIL7/PLT7, ANT, BBM and AIL1. Specifically expressed in the layer 1 (L1) of shoot meristems.

The protein resides in the nucleus. Probable transcription factor that binds to the L1 box DNA sequence 5'-TAAATG[CT]A-3'. Plays a role in maintaining the identity of L1 cells, possibly by interacting with their L1 box or other target-gene promoters; binds to the LIP1 gene promoter and stimulates its expression upon imbibition. Acts as a positive regulator of gibberellins (GAs)-regulated epidermal gene expression (e.g. LIP1, LIP2, LTP1, FDH and PDF1). Functionally redundant to ATML1. Involved, together with HDG proteins (e.g. HDG1, HDG2, HDG5 and HDG12), in the regulation of flower organs development by promoting the expression of APETALA 3 (AP3) in the epidermis and internal cell layers of developing flowers. Seems to promote cell differentiation. The protein is Homeobox-leucine zipper protein PROTODERMAL FACTOR 2 of Arabidopsis thaliana (Mouse-ear cress).